The sequence spans 775 residues: Chitin synthase 6 (775 aa).

Transmembrane regions (helical) follow at residues 19 to 39, 54 to 74, 94 to 114, 441 to 461, 470 to 490, and 498 to 518; these read VLLM…YCLV, CIIV…IMVV, LQWF…LFCI, FMQN…LAIM, LPVG…LYFG, and IWLY…YMVY. Low complexity predominate over residues 532–541; that stretch reads RADAAAADSH. 2 disordered regions span residues 532–603 and 702–775; these read RADA…DGKF and PSAF…KTSR. The span at 542 to 556 shows a compositional bias: basic and acidic residues; it reads TTAREAAEQAEKQGD. Residues 577-586 show a composition bias toward polar residues; it reads NRESTTTSEL. Positions 702 to 713 are enriched in low complexity; sequence PSAFPHAHSASA. N724 is a glycosylation site (N-linked (GlcNAc...) asparagine). The segment covering 732–741 has biased composition (basic and acidic residues); sequence RSEDIQRFSE. Residues 754–763 are compositionally biased toward polar residues; that stretch reads SRNVGNSSFA. Residue N759 is glycosylated (N-linked (GlcNAc...) asparagine). Over residues 766–775 the composition is skewed to basic residues; it reads MAKRTPKTSR.

This sequence belongs to the chitin synthase family. Class VII subfamily.

Its subcellular location is the cell membrane. The catalysed reaction is [(1-&gt;4)-N-acetyl-beta-D-glucosaminyl](n) + UDP-N-acetyl-alpha-D-glucosamine = [(1-&gt;4)-N-acetyl-beta-D-glucosaminyl](n+1) + UDP + H(+). Polymerizes chitin, a structural polymer of the cell wall and septum, by transferring the sugar moiety of UDP-GlcNAc to the non-reducing end of the growing chitin polymer. Shows additive effects in septum formation with CHS1, CHS2, CHS3A, CHS4, CHS5 and CHS7. Involved in virulence and mediates mycotoxin deoxinivalenol (DON) biosynthesis via the regulation of the expression of TRI4, TRI5 and TRI6. This Gibberella zeae (strain ATCC MYA-4620 / CBS 123657 / FGSC 9075 / NRRL 31084 / PH-1) (Wheat head blight fungus) protein is Chitin synthase 6.